We begin with the raw amino-acid sequence, 106 residues long: Large ribosomal subunit protein bL21 (106 aa).

This sequence belongs to the bacterial ribosomal protein bL21 family. In terms of assembly, part of the 50S ribosomal subunit. Contacts protein L20.

Functionally, this protein binds to 23S rRNA in the presence of protein L20. The protein is Large ribosomal subunit protein bL21 of Xanthomonas campestris pv. campestris (strain ATCC 33913 / DSM 3586 / NCPPB 528 / LMG 568 / P 25).